The following is a 297-amino-acid chain: Zinc finger protein 784 (297 aa).

Residues 1 to 12 are compositionally biased toward pro residues; sequence MAAARPDPPIPS. The tract at residues 1 to 39 is disordered; it reads MAAARPDPPIPSSPTRESPSPEPPDLVLVPDGRPVTPPG. Residue Ser-13 is modified to Phosphoserine. C2H2-type zinc fingers lie at residues 64–86, 100–122, and 128–150; these read FHCA…EHGH, SRCH…YSLH, and YRCS…QHRH. The segment at 149–175 is disordered; sequence RHGVEPGTSERLLPTTTTGQPNSRVAQ. Residues 162–173 are compositionally biased toward polar residues; sequence PTTTTGQPNSRV. C2H2-type zinc fingers lie at residues 195–217, 223–245, and 251–273; these read FACR…ERVH, YHCS…ARIH, and FRCM…QRTH. Positions 268 to 297 are disordered; that stretch reads KHQRTHFHGPGSGVGESRGQLRSSSVSQES. Residues 287–297 are compositionally biased toward polar residues; that stretch reads QLRSSSVSQES.

Belongs to the krueppel C2H2-type zinc-finger protein family.

It is found in the nucleus. May be involved in transcriptional regulation. This Mus musculus (Mouse) protein is Zinc finger protein 784 (Znf784).